The sequence spans 236 residues: 3-deoxy-D-manno-octulosonic acid kinase (236 aa).

The active site involves aspartate 167.

The protein belongs to the protein kinase superfamily. KdkA/RfaP family.

It localises to the cell inner membrane. The catalysed reaction is an alpha-Kdo-(2-&gt;6)-lipid IVA + ATP = a 4-O-phospho-alpha-Kdo-(2-&gt;6)-lipid IVA + ADP + H(+). The protein operates within bacterial outer membrane biogenesis; LPS core biosynthesis. Functionally, catalyzes the ATP-dependent phosphorylation of the 3-deoxy-D-manno-octulosonic acid (Kdo) residue in Kdo-lipid IV(A) at the 4-OH position. The protein is 3-deoxy-D-manno-octulosonic acid kinase of Vibrio vulnificus (strain YJ016).